Reading from the N-terminus, the 225-residue chain is Leucyl/phenylalanyl-tRNA--protein transferase (225 aa).

Belongs to the L/F-transferase family.

The protein resides in the cytoplasm. The enzyme catalyses N-terminal L-lysyl-[protein] + L-leucyl-tRNA(Leu) = N-terminal L-leucyl-L-lysyl-[protein] + tRNA(Leu) + H(+). The catalysed reaction is N-terminal L-arginyl-[protein] + L-leucyl-tRNA(Leu) = N-terminal L-leucyl-L-arginyl-[protein] + tRNA(Leu) + H(+). It catalyses the reaction L-phenylalanyl-tRNA(Phe) + an N-terminal L-alpha-aminoacyl-[protein] = an N-terminal L-phenylalanyl-L-alpha-aminoacyl-[protein] + tRNA(Phe). Its function is as follows. Functions in the N-end rule pathway of protein degradation where it conjugates Leu, Phe and, less efficiently, Met from aminoacyl-tRNAs to the N-termini of proteins containing an N-terminal arginine or lysine. The chain is Leucyl/phenylalanyl-tRNA--protein transferase from Nitrobacter winogradskyi (strain ATCC 25391 / DSM 10237 / CIP 104748 / NCIMB 11846 / Nb-255).